Consider the following 865-residue polypeptide: Leucine--tRNA ligase (865 aa).

The 'HIGH' region signature appears at P44–H54. The 'KMSKS' region signature appears at K625–S629. K628 provides a ligand contact to ATP.

It belongs to the class-I aminoacyl-tRNA synthetase family.

The protein resides in the cytoplasm. The enzyme catalyses tRNA(Leu) + L-leucine + ATP = L-leucyl-tRNA(Leu) + AMP + diphosphate. The sequence is that of Leucine--tRNA ligase from Maricaulis maris (strain MCS10) (Caulobacter maris).